A 510-amino-acid polypeptide reads, in one-letter code: Arginine biosynthesis bifunctional protein ArgJ, mitochondrial (510 aa).

Residues 57–70 (TSTNEPSAATTNVP) are compositionally biased toward polar residues. The interval 57 to 76 (TSTNEPSAATTNVPHPQEAP) is disordered. Residues T222, K248, T267, and E364 each coordinate substrate. T267 (nucleophile) is an active-site residue.

This sequence belongs to the ArgJ family. In terms of assembly, heterodimer of an alpha and a beta chain. The alpha and beta chains are autoproteolytically processed from a single precursor protein within the mitochondrion.

The protein localises to the mitochondrion matrix. The enzyme catalyses N(2)-acetyl-L-ornithine + L-glutamate = N-acetyl-L-glutamate + L-ornithine. It catalyses the reaction L-glutamate + acetyl-CoA = N-acetyl-L-glutamate + CoA + H(+). Its pathway is amino-acid biosynthesis; L-arginine biosynthesis; L-ornithine and N-acetyl-L-glutamate from L-glutamate and N(2)-acetyl-L-ornithine (cyclic): step 1/1. The protein operates within amino-acid biosynthesis; L-arginine biosynthesis; N(2)-acetyl-L-ornithine from L-glutamate: step 1/4. Functionally, catalyzes two activities which are involved in the cyclic version of arginine biosynthesis: the synthesis of acetylglutamate from glutamate and acetyl-CoA, and of ornithine by transacetylation between acetylornithine and glutamate. This chain is Arginine biosynthesis bifunctional protein ArgJ, mitochondrial, found in Malassezia globosa (strain ATCC MYA-4612 / CBS 7966) (Dandruff-associated fungus).